Consider the following 404-residue polypeptide: Formate-dependent phosphoribosylglycinamide formyltransferase (404 aa).

N(1)-(5-phospho-beta-D-ribosyl)glycinamide-binding positions include 25-26 and Glu85; that span reads EL. ATP-binding positions include Arg118, Lys159, 164–169, 199–202, and Glu207; these read SSGKGQ and EGFI. Positions 123–318 constitute an ATP-grasp domain; the sequence is RLAAEELGLP…EFELHARAIL (196 aa). Glu277 and Glu289 together coordinate Mg(2+). N(1)-(5-phospho-beta-D-ribosyl)glycinamide contacts are provided by residues Asp296, Lys365, and 372–373; that span reads RR.

It belongs to the PurK/PurT family. In terms of assembly, homodimer.

It carries out the reaction N(1)-(5-phospho-beta-D-ribosyl)glycinamide + formate + ATP = N(2)-formyl-N(1)-(5-phospho-beta-D-ribosyl)glycinamide + ADP + phosphate + H(+). It functions in the pathway purine metabolism; IMP biosynthesis via de novo pathway; N(2)-formyl-N(1)-(5-phospho-D-ribosyl)glycinamide from N(1)-(5-phospho-D-ribosyl)glycinamide (formate route): step 1/1. Involved in the de novo purine biosynthesis. Catalyzes the transfer of formate to 5-phospho-ribosyl-glycinamide (GAR), producing 5-phospho-ribosyl-N-formylglycinamide (FGAR). Formate is provided by PurU via hydrolysis of 10-formyl-tetrahydrofolate. In Burkholderia lata (strain ATCC 17760 / DSM 23089 / LMG 22485 / NCIMB 9086 / R18194 / 383), this protein is Formate-dependent phosphoribosylglycinamide formyltransferase.